A 599-amino-acid chain; its full sequence is Elongation factor 4 (599 aa).

Residues 5 to 187 enclose the tr-type G domain; that stretch reads NRIRNFSIVA…AIVTRLPAPK (183 aa). GTP-binding positions include 17–22 and 134–137; these read DHGKST and NKVD.

Belongs to the TRAFAC class translation factor GTPase superfamily. Classic translation factor GTPase family. LepA subfamily.

The protein localises to the cell inner membrane. It catalyses the reaction GTP + H2O = GDP + phosphate + H(+). Required for accurate and efficient protein synthesis under certain stress conditions. May act as a fidelity factor of the translation reaction, by catalyzing a one-codon backward translocation of tRNAs on improperly translocated ribosomes. Back-translocation proceeds from a post-translocation (POST) complex to a pre-translocation (PRE) complex, thus giving elongation factor G a second chance to translocate the tRNAs correctly. Binds to ribosomes in a GTP-dependent manner. This Jannaschia sp. (strain CCS1) protein is Elongation factor 4.